A 434-amino-acid chain; its full sequence is DNA primase large subunit PriL (434 aa).

C281, C392, C403, and C409 together coordinate [4Fe-4S] cluster.

This sequence belongs to the eukaryotic-type primase large subunit family. In terms of assembly, heterodimer of a small subunit (PriS) and a large subunit (PriL). [4Fe-4S] cluster is required as a cofactor.

Its function is as follows. Regulatory subunit of DNA primase, an RNA polymerase that catalyzes the synthesis of short RNA molecules used as primers for DNA polymerase during DNA replication. Stabilizes and modulates the activity of the small subunit, increasing the rate of DNA synthesis, and conferring RNA synthesis capability. The DNA polymerase activity may enable DNA primase to also catalyze primer extension after primer synthesis. May also play a role in DNA repair. This is DNA primase large subunit PriL from Methanothermobacter thermautotrophicus (strain ATCC 29096 / DSM 1053 / JCM 10044 / NBRC 100330 / Delta H) (Methanobacterium thermoautotrophicum).